The primary structure comprises 446 residues: Tol-Pal system protein TolB (446 aa).

The N-terminal stretch at 1–36 is a signal peptide; it reads MMDVQTVRRGNAVQSLMSKLILPLVMAVAFALPARA. Residues 424 to 446 are disordered; the sequence is GYNERPSPTPTFASDPAWSPRIQ.

It belongs to the TolB family. As to quaternary structure, the Tol-Pal system is composed of five core proteins: the inner membrane proteins TolA, TolQ and TolR, the periplasmic protein TolB and the outer membrane protein Pal. They form a network linking the inner and outer membranes and the peptidoglycan layer.

The protein localises to the periplasm. In terms of biological role, part of the Tol-Pal system, which plays a role in outer membrane invagination during cell division and is important for maintaining outer membrane integrity. This Parvibaculum lavamentivorans (strain DS-1 / DSM 13023 / NCIMB 13966) protein is Tol-Pal system protein TolB.